Consider the following 127-residue polypeptide: Ribonuclease P protein component 1 (127 aa).

It belongs to the eukaryotic/archaeal RNase P protein component 1 family. As to quaternary structure, consists of a catalytic RNA component and at least 5 protein subunits. Forms a heterodimeric subcomplex with Rnp4. Reconstituted enzyme missing individual protein subunits is suboptimally active, showing each subunit contributes to optimization of activity.

It is found in the cytoplasm. It catalyses the reaction Endonucleolytic cleavage of RNA, removing 5'-extranucleotides from tRNA precursor.. Functionally, part of ribonuclease P (RNase P), a protein complex that generates mature tRNA molecules by cleaving their 5'-ends. Binds RNase P RNA. The polypeptide is Ribonuclease P protein component 1 (Pyrococcus horikoshii (strain ATCC 700860 / DSM 12428 / JCM 9974 / NBRC 100139 / OT-3)).